Consider the following 257-residue polypeptide: Tryptophan synthase alpha chain (257 aa).

Residues E51 and D62 each act as proton acceptor in the active site.

It belongs to the TrpA family. Tetramer of two alpha and two beta chains.

The enzyme catalyses (1S,2R)-1-C-(indol-3-yl)glycerol 3-phosphate + L-serine = D-glyceraldehyde 3-phosphate + L-tryptophan + H2O. The protein operates within amino-acid biosynthesis; L-tryptophan biosynthesis; L-tryptophan from chorismate: step 5/5. Its function is as follows. The alpha subunit is responsible for the aldol cleavage of indoleglycerol phosphate to indole and glyceraldehyde 3-phosphate. The sequence is that of Tryptophan synthase alpha chain from Nitratidesulfovibrio vulgaris (strain ATCC 29579 / DSM 644 / CCUG 34227 / NCIMB 8303 / VKM B-1760 / Hildenborough) (Desulfovibrio vulgaris).